Reading from the N-terminus, the 456-residue chain is Probable hexose phosphate transport protein (456 aa).

A run of 11 helical transmembrane segments spans residues 34–54, 70–90, 113–133, 161–181, 185–205, 257–277, 302–322, 331–351, 363–383, 394–414, and 421–441; these read IFYS…SFTF, LGII…VSGV, IFFG…INGW, VWST…GVAI, GWRG…FILI, YVLS…IYVV, LCVS…GWLS, GPMN…LWGT, FLFI…LAAA, ASGF…YPLG, and GWHG…ILFL.

This sequence belongs to the major facilitator superfamily. Organophosphate:Pi antiporter (OPA) (TC 2.A.1.4) family.

The protein resides in the cell membrane. Its function is as follows. Transport protein for sugar phosphate uptake. The protein is Probable hexose phosphate transport protein of Chlamydia trachomatis serovar D (strain ATCC VR-885 / DSM 19411 / UW-3/Cx).